Reading from the N-terminus, the 673-residue chain is MEELIKLNFPKSVEEYKKQSEELMETYDKGLKEIIEIPKEKRTFANTFEATDKLDVKFRNIESSLTFLANASTDEKVRDVANEVEATLSKYSIATSMREDLYQAYVDCCKQNNDFKESDLSKEQLRYVSKTLEGFEKNGLQLPKEKREKLKEIMTKISDNSIKFSKNIADDKTKLSFSMEQLNGIPKETIESFEKDESKPGNYFISLKYPDVIPTMKYCTVAETRKAVEFANGSKCIKENTPILEETCKLRFEAAQLLGFKDWASYKSNYLMVKSNDNIQSFEERMRKLLTPHAVTEYDRLKQLKKKIYLEKGGNPETYDDHYYSYDNAFYNNVMLVQDYQVDNNLVKEYFPFEVVIKGIFNCYQELLNVKFTEVPAYQPWHEEVKMYSCVDTADSNKLLGHFYIDLFPREGKYSHAAVWPLIPGYERADGEKQYPVAAMLCNFTKPTPTTPSLLTHDEVVTFFHEFGHVMHNMSTKVHYSMFSGTSVERDFVECPSQLFEFWCWNKDVLVNKLSGHYKDHSKKLPTDLVERMIAAKNLNVAIFYLRQIQLALFDNAIHSGNPANFTNTADLYHRIATDVALNPNQKGTNPGCSFGHLLGGYDAQYYSYLYSECFSASIFEIFDKHGVMNKELGARLRNQVLAVGGSQPSSETIENFLGSKPNEAAFLKTIGL.

Position 465 (H465) interacts with Zn(2+). E466 is a catalytic residue. H469 and H472 together coordinate Zn(2+).

This sequence belongs to the peptidase M3 family. The cofactor is Zn(2+).

In Dictyostelium discoideum (Social amoeba), this protein is Thimet-like oligopeptidase.